Consider the following 154-residue polypeptide: Vimentin (154 aa).

Over residues 1–13 (MSTRSVSSSSYRR) the composition is skewed to low complexity. Residues 1 to 31 (MSTRSVSSSSYRRMFGGPGTASRPSSTRSYV) are disordered. An N-acetylserine modification is found at Ser-2. The segment at 2–95 (STRSVSSSSY…FSLADAINTE (94 aa)) is head. At Ser-5 the chain carries Phosphoserine. Phosphoserine; by PKA and PKC; alternate is present on Ser-7. A glycan (O-linked (GlcNAc) serine; alternate) is linked at Ser-7. Residue Ser-8 is modified to Phosphoserine. Phosphoserine; by PKC is present on residues Ser-9 and Ser-10. The residue at position 20 (Thr-20) is a Phosphothreonine. Ser-25 is subject to Phosphoserine; by PKA and PKC. A Phosphoserine; by PKC modification is found at Ser-26. Thr-33 carries an O-linked (GlcNAc) threonine glycan. Ser-34 carries an O-linked (GlcNAc) serine; alternate glycan. Ser-34 is subject to Phosphoserine; by PKC; alternate. Ser-39 is subject to Phosphoserine; by CaMK2, PKA, PKC and ROCK2. Ser-42 carries the phosphoserine; by PKC modification. Phosphoserine is present on Ser-49. Tyr-53 carries the post-translational modification Phosphotyrosine. Ser-55 carries the post-translational modification Phosphoserine. Ser-56 bears the Phosphoserine; by CDK5 and CDK1 mark. Residue Tyr-61 is modified to Phosphotyrosine. Ser-66 bears the Phosphoserine; by PKA and PKC mark. Ser-72 carries the post-translational modification Phosphoserine; by AURKB and ROCK2. Position 83 is a phosphoserine; by CaMK2 (Ser-83). Ser-87 carries the post-translational modification Phosphoserine. The interval 96–131 (FKNTRTNEKVELQELNDRFANYIDKVRFLEQQNKIL) is coil 1A. A coiled-coil region spans residues 96–131 (FKNTRTNEKVELQELNDRFANYIDKVRFLEQQNKIL). The IF rod domain maps to 103-154 (EKVELQELNDRFANYIDKVRFLEQQNKILLAELEQLKGQGKSRLGHLYEEEM). Lys-104 is covalently cross-linked (Glycyl lysine isopeptide (Lys-Gly) (interchain with G-Cter in SUMO2)). A Phosphotyrosine modification is found at Tyr-117. An N6-acetyllysine; alternate mark is found at Lys-120, Lys-129, and Lys-139. Lys-120 and Lys-129 each carry N6-succinyllysine; alternate. Glycyl lysine isopeptide (Lys-Gly) (interchain with G-Cter in SUMO2); alternate cross-links involve residues Lys-120, Lys-129, and Lys-139. The segment at 132–153 (LAELEQLKGQGKSRLGHLYEEE) is linker 1. Ser-144 is subject to Phosphoserine. Position 154 (Met-154) is a region of interest, coil 1B.

The protein belongs to the intermediate filament family. Homomer assembled from elementary dimers. Identified in complexes that contain VIM, EZR, AHNAK, BFSP1, BFSP2, ANK2, PLEC, PRX and spectrin. Interacts with BCAS3. Interacts with LGSN. Interacts with SYNM. Interacts (via rod region) with PLEC (via CH 1 domain). Interacts with STK33. Interacts with LARP6. Interacts with RAB8B. Interacts with TOR1A; the interaction associates TOR1A with the cytoskeleton. Interacts with TOR1AIP1. Interacts with TOR1AIP1. Interacts with DIAPH1. Interacts with EPPK1; interaction is dependent of higher-order structure of intermediate filament. Interacts with the non-receptor tyrosine kinase SRMS; the interaction leads to phosphorylation of VIM. Interacts with NOD2. Interacts (via head region) with CORO1C. Interacts with HDGF. Interacts with PRKCE (via phorbol-ester/DAG-type 2 domain). Interacts with BFSP2. Interacts with PPL. Interacts with PKP1 and PKP2. Interacts with SCRIB (via PDZ domains); the interaction protects SCRIB from proteasomal degradation and facilitates SCRIB localization to intermediate filaments, the interaction is reduced by cell contact inhibition. In terms of processing, one of the most prominent phosphoproteins in various cells of mesenchymal origin. Phosphorylation is enhanced during cell division, at which time vimentin filaments are significantly reorganized. Phosphorylation by PKN1 inhibits the formation of filaments. Filament disassembly during mitosis is promoted by phosphorylation at Ser-55 as well as by nestin. Phosphorylated at Ser-56 by CDK5 during neutrophil secretion in the cytoplasm. Phosphorylated by STK33. Phosphorylated on tyrosine residues by SRMS.

It is found in the cytoplasm. The protein localises to the cytoskeleton. Its subcellular location is the nucleus matrix. It localises to the cell membrane. In terms of biological role, vimentins are class-III intermediate filaments found in various non-epithelial cells, especially mesenchymal cells. Vimentin is attached to the nucleus, endoplasmic reticulum, and mitochondria, either laterally or terminally. Plays a role in cell directional movement, orientation, cell sheet organization and Golgi complex polarization at the cell migration front. Protects SCRIB from proteasomal degradation and facilitates its localization to intermediate filaments in a cell contact-mediated manner. Involved with LARP6 in the stabilization of type I collagen mRNAs for CO1A1 and CO1A2. This Ovis aries (Sheep) protein is Vimentin (VIM).